The primary structure comprises 155 residues: Small ribosomal subunit protein uS7c (155 aa).

It belongs to the universal ribosomal protein uS7 family. As to quaternary structure, part of the 30S ribosomal subunit.

The protein resides in the plastid. Its subcellular location is the chloroplast. Functionally, one of the primary rRNA binding proteins, it binds directly to 16S rRNA where it nucleates assembly of the head domain of the 30S subunit. The chain is Small ribosomal subunit protein uS7c (rps7) from Chaetosphaeridium globosum (Charophycean green alga).